Consider the following 172-residue polypeptide: Small ribosomal subunit protein uS5 (172 aa).

Residues 17–80 enclose the S5 DRBM domain; it reads LREKMISVNR…EQARRNMFKV (64 aa).

Belongs to the universal ribosomal protein uS5 family. In terms of assembly, part of the 30S ribosomal subunit. Contacts proteins S4 and S8.

Functionally, with S4 and S12 plays an important role in translational accuracy. Its function is as follows. Located at the back of the 30S subunit body where it stabilizes the conformation of the head with respect to the body. The sequence is that of Small ribosomal subunit protein uS5 from Burkholderia pseudomallei (strain 1106a).